Consider the following 187-residue polypeptide: POM121 and ZP3 fusion protein (187 aa).

The disordered stretch occupies residues 166–187 (GTPSHSRRQPRVVSQWSTSASL). The segment covering 177 to 187 (VVSQWSTSASL) has biased composition (polar residues).

Expressed in spleen, thymus, pancreas, testis, ovary, small intestine, colon and lymphocytes.

This Homo sapiens (Human) protein is POM121 and ZP3 fusion protein (POMZP3).